A 632-amino-acid chain; its full sequence is uncharacterized protein (632 aa).

Transmembrane regions (helical) follow at residues 255–275, 506–526, 566–586, and 603–623; these read LFYA…ELRV, IALL…LTSI, MIFA…SMVF, and IVVI…AVLF.

It is found in the cell membrane. This is an uncharacterized protein from Mycoplasma pneumoniae (strain ATCC 29342 / M129 / Subtype 1) (Mycoplasmoides pneumoniae).